We begin with the raw amino-acid sequence, 420 residues long: UDP-N-acetylglucosamine 1-carboxyvinyltransferase (420 aa).

22–23 contributes to the phosphoenolpyruvate binding site; sequence KN. R91 is a binding site for UDP-N-acetyl-alpha-D-glucosamine. C115 (proton donor) is an active-site residue. C115 is modified (2-(S-cysteinyl)pyruvic acid O-phosphothioketal). Residues 120 to 124, 160 to 163, D305, and I327 each bind UDP-N-acetyl-alpha-D-glucosamine; these read RPVDL and KVSV.

This sequence belongs to the EPSP synthase family. MurA subfamily.

The protein localises to the cytoplasm. The enzyme catalyses phosphoenolpyruvate + UDP-N-acetyl-alpha-D-glucosamine = UDP-N-acetyl-3-O-(1-carboxyvinyl)-alpha-D-glucosamine + phosphate. The protein operates within cell wall biogenesis; peptidoglycan biosynthesis. In terms of biological role, cell wall formation. Adds enolpyruvyl to UDP-N-acetylglucosamine. This is UDP-N-acetylglucosamine 1-carboxyvinyltransferase from Pectobacterium carotovorum subsp. carotovorum (strain PC1).